A 221-amino-acid chain; its full sequence is tRNA (guanine-N(7)-)-methyltransferase (221 aa).

Positions 43, 68, and 123 each coordinate S-adenosyl-L-methionine. Residue Asp-123 is part of the active site. Substrate-binding positions include Lys-127, Asp-159, and 199 to 202; that span reads TEYE.

Belongs to the class I-like SAM-binding methyltransferase superfamily. TrmB family.

It carries out the reaction guanosine(46) in tRNA + S-adenosyl-L-methionine = N(7)-methylguanosine(46) in tRNA + S-adenosyl-L-homocysteine. It functions in the pathway tRNA modification; N(7)-methylguanine-tRNA biosynthesis. Functionally, catalyzes the formation of N(7)-methylguanine at position 46 (m7G46) in tRNA. The sequence is that of tRNA (guanine-N(7)-)-methyltransferase from Mycoplasma mycoides subsp. mycoides SC (strain CCUG 32753 / NCTC 10114 / PG1).